Consider the following 418-residue polypeptide: Gamma-glutamyl phosphate reductase (418 aa).

It belongs to the gamma-glutamyl phosphate reductase family.

Its subcellular location is the cytoplasm. The enzyme catalyses L-glutamate 5-semialdehyde + phosphate + NADP(+) = L-glutamyl 5-phosphate + NADPH + H(+). The protein operates within amino-acid biosynthesis; L-proline biosynthesis; L-glutamate 5-semialdehyde from L-glutamate: step 2/2. Functionally, catalyzes the NADPH-dependent reduction of L-glutamate 5-phosphate into L-glutamate 5-semialdehyde and phosphate. The product spontaneously undergoes cyclization to form 1-pyrroline-5-carboxylate. The protein is Gamma-glutamyl phosphate reductase of Geobacter metallireducens (strain ATCC 53774 / DSM 7210 / GS-15).